A 182-amino-acid polypeptide reads, in one-letter code: NADH-quinone oxidoreductase subunit I (182 aa).

2 4Fe-4S ferredoxin-type domains span residues 52–82 and 92–121; these read LTRD…LQKA and DFFR…LTPD. 8 residues coordinate [4Fe-4S] cluster: cysteine 62, cysteine 65, cysteine 68, cysteine 72, cysteine 101, cysteine 104, cysteine 107, and cysteine 111.

This sequence belongs to the complex I 23 kDa subunit family. NDH-1 is composed of 13 different subunits. Subunits NuoA, H, J, K, L, M, N constitute the membrane sector of the complex. It depends on [4Fe-4S] cluster as a cofactor.

The protein localises to the cell inner membrane. The catalysed reaction is a quinone + NADH + 5 H(+)(in) = a quinol + NAD(+) + 4 H(+)(out). Its function is as follows. NDH-1 shuttles electrons from NADH, via FMN and iron-sulfur (Fe-S) centers, to quinones in the respiratory chain. The immediate electron acceptor for the enzyme in this species is believed to be ubiquinone. Couples the redox reaction to proton translocation (for every two electrons transferred, four hydrogen ions are translocated across the cytoplasmic membrane), and thus conserves the redox energy in a proton gradient. Required for plants roots colonization. This Pseudomonas fluorescens protein is NADH-quinone oxidoreductase subunit I (nuoI).